We begin with the raw amino-acid sequence, 324 residues long: tRNA pseudouridine synthase B (324 aa).

Asp49 acts as the Nucleophile in catalysis.

It belongs to the pseudouridine synthase TruB family. Type 1 subfamily.

The enzyme catalyses uridine(55) in tRNA = pseudouridine(55) in tRNA. Functionally, responsible for synthesis of pseudouridine from uracil-55 in the psi GC loop of transfer RNAs. This Brucella anthropi (strain ATCC 49188 / DSM 6882 / CCUG 24695 / JCM 21032 / LMG 3331 / NBRC 15819 / NCTC 12168 / Alc 37) (Ochrobactrum anthropi) protein is tRNA pseudouridine synthase B.